The chain runs to 168 residues: uncharacterized protein (168 aa).

The next 2 helical transmembrane spans lie at 41 to 61 (LLPWKEILVPLSFVMLFLFFI) and 133 to 153 (KFVISVGDILVFIGVFIFFVL).

It is found in the cell membrane. This is an uncharacterized protein from Thermotoga maritima (strain ATCC 43589 / DSM 3109 / JCM 10099 / NBRC 100826 / MSB8).